We begin with the raw amino-acid sequence, 112 residues long: Gastrula zinc finger protein XlCGF16.1 (112 aa).

4 C2H2-type zinc fingers span residues 6-28 (YNCS…QKTH), 34-56 (FVCF…QRIH), 62-84 (FSCT…HKTH), and 90-112 (FLCF…HRTH).

It belongs to the krueppel C2H2-type zinc-finger protein family.

It is found in the nucleus. May be involved in transcriptional regulation. This chain is Gastrula zinc finger protein XlCGF16.1, found in Xenopus laevis (African clawed frog).